The chain runs to 158 residues: Ribosome maturation factor RimP (158 aa).

It belongs to the RimP family.

Its subcellular location is the cytoplasm. Its function is as follows. Required for maturation of 30S ribosomal subunits. In Aquifex aeolicus (strain VF5), this protein is Ribosome maturation factor RimP.